Here is a 779-residue protein sequence, read N- to C-terminus: Abnormal cell migration protein 10 (779 aa).

Over residues 78–97 (NELEADTEEDIAETADDEES) the composition is skewed to acidic residues. Disordered stretches follow at residues 78–105 (NELE…EKTE), 189–217 (SSSR…PQQP), and 242–302 (AASS…NAEE). Residues 189–200 (SSSRENVKSIST) show a composition bias toward polar residues. The span at 242–254 (AASSCSSPDGDSA) shows a compositional bias: low complexity. Residues 256-293 (GDSSSTESSNNRCRNSAFSSNDSCRDSLNTPSPTQVSP) show a composition bias toward polar residues. A Ras-associating domain is found at 317–407 (EAKVTKIFVK…NKLYFMRRPD (91 aa)). The PH domain maps to 456–566 (PPEMEGFLYL…WLVALRIAKN (111 aa)). 2 stretches are compositionally biased toward polar residues: residues 645 to 660 (SFSV…SRTS) and 688 to 698 (RASTSSPTIPQ). Residues 645 to 763 (SFSVNSCQQS…SPMAPAKNDL (119 aa)) form a disordered region. The segment covering 708–729 (PAPPPVASVMRMPPPVTPPKPC) has biased composition (pro residues).

It belongs to the MRL family. May interact (via Ras-associating and PH domains) with ced-10 (GTP-bound form).

It localises to the perikaryon. Its function is as follows. Required cell non-autonomously for proper development of the excretory canals and for the long-range anterior-posterior migrations of embryonic neurons CAN, ALM and HSN. Plays a role, probably downstream of ced-10/rac1, in orientating axonal growth of HSN and AVM neurons in response to guidance cues such as slt-1. May regulate growth cone polarization by promoting asymmetric F-actin assembly. May be involved in signal transduction during cell migration. This is Abnormal cell migration protein 10 from Caenorhabditis elegans.